We begin with the raw amino-acid sequence, 663 residues long: Protein-arginine deiminase type-4 (663 aa).

Residues asparagine 153, aspartate 155, aspartate 157, aspartate 165, aspartate 168, glutamate 170, aspartate 176, and aspartate 179 each contribute to the Ca(2+) site. Arginine 205, arginine 212, and arginine 218 each carry citrulline. Glutamine 349 contributes to the Ca(2+) binding site. Aspartate 350 is an active-site residue. The Ca(2+) site is built by glutamate 351, glutamate 353, aspartate 369, and serine 370. Residue arginine 372 is modified to Citrulline. Residue asparagine 373 participates in Ca(2+) binding. Citrulline occurs at positions 374 and 383. Arginine 374 lines the substrate pocket. Positions 388, 407, 410, and 411 each coordinate Ca(2+). Residues histidine 471 and aspartate 473 contribute to the active site. Substrate is bound at residue arginine 639. Cysteine 645 is a catalytic residue.

The protein belongs to the protein arginine deiminase family. Ca(2+) serves as cofactor. Autocitrullination at Arg-372 and Arg-374 inactivates the enzyme. As to expression, expressed in eosinophils and neutrophils, not expressed in peripheral monocytes or lymphocytes.

The protein localises to the cytoplasm. It is found in the nucleus. It localises to the cytoplasmic granule. The catalysed reaction is L-arginyl-[protein] + H2O = L-citrullyl-[protein] + NH4(+). Strongly Inhibited by F-amidine and N-alpha-benzoyl-N5-(2-chloro-1-iminoethyl)-L-ornithine amide (Cl-amidine). These inhibitors are however not specific to PADI4 and also inhibit other members of the family. Incorporation of a carboxylate ortho to the backbone amide of Cl-amidine results in inhibitors with increased specificity for PADI4: N-alpha-(2-carboxyl)benzoyl-N(5)-(2-fluoro-1-iminoethyl)-L-ornithine amide (o-F-amidine) and N-alpha-(2-carboxyl)benzoyl-N(5)-(2-chloro-1-iminoethyl)-L-ornithine amide (o-Cl-amidine). Strongly and specifically inhibited by Thr-Asp-F-amidine (TDFA); other members of the family are not inhibited. Its function is as follows. Catalyzes the citrullination/deimination of arginine residues of proteins such as histones, thereby playing a key role in histone code and regulation of stem cell maintenance. Citrullinates histone H1 at 'Arg-54' (to form H1R54ci), histone H3 at 'Arg-2', 'Arg-8', 'Arg-17' and/or 'Arg-26' (to form H3R2ci, H3R8ci, H3R17ci, H3R26ci, respectively) and histone H4 at 'Arg-3' (to form H4R3ci). Acts as a key regulator of stem cell maintenance by mediating citrullination of histone H1: citrullination of 'Arg-54' of histone H1 (H1R54ci) results in H1 displacement from chromatin and global chromatin decondensation, thereby promoting pluripotency and stem cell maintenance. Promotes profound chromatin decondensation during the innate immune response to infection in neutrophils by mediating formation of H1R54ci. Required for the formation of neutrophil extracellular traps (NETs); NETs are mainly composed of DNA fibers and are released by neutrophils to bind pathogens during inflammation. Citrullination of histone H3 prevents their methylation by CARM1 and HRMT1L2/PRMT1 and represses transcription. Citrullinates EP300/P300 at 'Arg-2142', which favors its interaction with NCOA2/GRIP1. In Homo sapiens (Human), this protein is Protein-arginine deiminase type-4 (PADI4).